We begin with the raw amino-acid sequence, 46 residues long: Protein PsbN (46 aa).

The chain crosses the membrane as a helical span at residues 7–27 (ALSVAIGVLAVLFGLTGFGVY).

This sequence belongs to the PsbN family.

Its subcellular location is the cellular thylakoid membrane. In terms of biological role, may play a role in photosystem I and II biogenesis. In Synechococcus sp. (strain CC9605), this protein is Protein PsbN.